Consider the following 141-residue polypeptide: VLSPADKTNVKTAWGKVGAHAGDYGADALERMFLSFPTTKTYFPHFDLSHGSAQVKGHGKKVADALSNAVAHVDDMPNALSALSDLHAHKLRVDPVNFKLLSHCLLVTLAAHHPADFTPAVHASLDKFLASVSTVLTSKYR.

The Globin domain occupies 1 to 141; that stretch reads VLSPADKTNV…VSTVLTSKYR (141 aa). Position 3 is a phosphoserine (serine 3). N6-succinyllysine is present on lysine 7. At threonine 8 the chain carries Phosphothreonine. Lysine 11 bears the N6-succinyllysine mark. Lysine 16 is modified (N6-acetyllysine; alternate). Position 16 is an N6-succinyllysine; alternate (lysine 16). A Phosphotyrosine modification is found at tyrosine 24. Serine 35 carries the phosphoserine modification. Lysine 40 is subject to N6-succinyllysine. At serine 49 the chain carries Phosphoserine. O2 is bound at residue histidine 58. Residue histidine 87 participates in heme b binding. Serine 102 carries the phosphoserine modification. Phosphothreonine is present on threonine 108. A phosphoserine mark is found at serine 124 and serine 131. Threonine 134 and threonine 137 each carry phosphothreonine. Serine 138 carries the phosphoserine modification.

Belongs to the globin family. In terms of assembly, heterotetramer of two alpha chains and two beta chains. Red blood cells.

Its function is as follows. Involved in oxygen transport from the lung to the various peripheral tissues. In terms of biological role, hemopressin acts as an antagonist peptide of the cannabinoid receptor CNR1. Hemopressin-binding efficiently blocks cannabinoid receptor CNR1 and subsequent signaling. The protein is Hemoglobin subunit alpha (HBA) of Cebus capucinus (White-faced sapajou).